Reading from the N-terminus, the 543-residue chain is EH domain-containing protein 2 (543 aa).

2 positions are modified to phosphoserine: Ser-3 and Ser-44. Residues 55–286 (FDGKPMVLVA…DLFRDIQGLP (232 aa)) form the Dynamin-type G domain. A G1 motif region spans residues 65-72 (GQYSTGKT). 65–72 (GQYSTGKT) is an ATP binding site. Residues 91-92 (EP) are G2 motif. The G3 motif stretch occupies residues 153-156 (DTPG). Residues 219 to 222 (NKAD) are G4 motif. ATP is bound at residue Lys-220. Val-243 is a region of interest (G5 motif). Trp-258 serves as a coordination point for ATP. The tract at residues 320–340 (SVFGKENKKKQLIFKLPVIFA) is mediates membrane-binding. Ser-438, Ser-468, Ser-470, Ser-484, and Ser-493 each carry phosphoserine. Positions 449–537 (DKSKYDEIFY…RRLVPPSKRR (89 aa)) constitute an EH domain. An EF-hand domain is found at 481–516 (LPNSVLGRIWKLSDVDRDGMLDDEEFALASHLIEAK). Residues Asp-494, Asp-496, Asp-498, Met-500, and Glu-505 each coordinate Ca(2+). The disordered stretch occupies residues 521-543 (GLPTNLPRRLVPPSKRRQKGSAE). Positions 534-543 (SKRRQKGSAE) are enriched in basic residues.

This sequence belongs to the TRAFAC class dynamin-like GTPase superfamily. Dynamin/Fzo/YdjA family. EHD subfamily. In terms of assembly, homodimer and homooligomer. Interacts with EHD1. May also interact with EHD3 and EHD4. Interacts with MYOF. Interacts with EHBP1. Interacts with FER1L5 (via second C2 domain). Interacts with CAV1 in a cholesterol-dependent manner. Interacts (via EH domain) with PACSIN2 (via NPF motifs); this interaction probably stabilizes the caveolae.

Its subcellular location is the cell membrane. The protein localises to the membrane. The protein resides in the caveola. It is found in the endosome membrane. It localises to the cytoplasm. Its subcellular location is the cytosol. Its activity is regulated as follows. The very low intrinsic ATPase activity is increased upon interaction with liposomes. In terms of biological role, ATP- and membrane-binding protein that controls membrane reorganization/tubulation upon ATP hydrolysis. Plays a role in membrane trafficking between the plasma membrane and endosomes. Important for the internalization of GLUT4. Required for fusion of myoblasts to skeletal muscle myotubes. Required for normal translocation of FER1L5 to the plasma membrane. Regulates the equilibrium between cell surface-associated and cell surface-dissociated caveolae by constraining caveolae at the cell membrane. The sequence is that of EH domain-containing protein 2 from Rattus norvegicus (Rat).